The sequence spans 246 residues: Probable septum site-determining protein MinC (246 aa).

This sequence belongs to the MinC family. As to quaternary structure, interacts with MinD and FtsZ.

Functionally, cell division inhibitor that blocks the formation of polar Z ring septums. Rapidly oscillates between the poles of the cell to destabilize FtsZ filaments that have formed before they mature into polar Z rings. Prevents FtsZ polymerization. This Pseudomonas syringae pv. tomato (strain ATCC BAA-871 / DC3000) protein is Probable septum site-determining protein MinC.